A 366-amino-acid chain; its full sequence is RISC-loading complex subunit TARBP2 (366 aa).

Sufficient for interaction with PRKRA stretches follow at residues 22-105 (MLAA…EPAL), 152-234 (SPQQ…DARD), and 287-366 (LGAL…AGSK). The 68-residue stretch at 30 to 97 (TPISLLQEYG…AEVALKHLKG (68 aa)) folds into the DRBM 1 domain. A disordered region spans residues 135 to 158 (PSAVPTRSSPMEVQPPVSPQQSEC). Serine 152 carries the post-translational modification Phosphoserine. DRBM domains follow at residues 159-227 (NPVG…RVHT) and 293-361 (ACCS…YLKI). A sufficient for interaction with DICER1 region spans residues 228-366 (VPLDARDGNE…QYLKIMAGSK (139 aa)).

This sequence belongs to the TARBP2 family. In terms of assembly, self-associates. Component of the RISC loading complex (RLC), or micro-RNA (miRNA) loading complex (miRLC), which is composed of DICER1, AGO2 and TARBP2. Note that the trimeric RLC/miRLC is also referred to as RISC. Interacts with EIF2AK2/PKR and inhibits its protein kinase activity. Interacts with DHX9 and PRKRA. Interacts with DICER1, AGO2, MOV10, EIF6 and RPL7A (60S ribosome subunit); they form a large RNA-induced silencing complex (RISC). Interacts with IRF7; this interaction prevents IRF7 phosphorylation and activation.

The protein localises to the cytoplasm. Its subcellular location is the perinuclear region. It localises to the nucleus. Required for formation of the RNA induced silencing complex (RISC). Component of the RISC loading complex (RLC), also known as the micro-RNA (miRNA) loading complex (miRLC), which is composed of DICER1, AGO2 and TARBP2. Within the RLC/miRLC, DICER1 and TARBP2 are required to process precursor miRNAs (pre-miRNAs) to mature miRNAs and then load them onto AGO2. AGO2 bound to the mature miRNA constitutes the minimal RISC and may subsequently dissociate from DICER1 and TARBP2. May also play a role in the production of short interfering RNAs (siRNAs) from double-stranded RNA (dsRNA) by DICER1. Binds in vitro to the PRM1 3'-UTR. Seems to act as a repressor of translation. For some pre-miRNA substrates, may also alter the choice of cleavage site by DICER1. Negatively regulates IRF7-mediated IFN-beta signaling triggered by viral infection by inhibiting the phosphorylation of IRF7 and promoting its 'Lys'-48-linked ubiquitination and degradation. The protein is RISC-loading complex subunit TARBP2 of Bos taurus (Bovine).